The following is a 64-amino-acid chain: Small ribosomal subunit protein bS21 (64 aa).

Belongs to the bacterial ribosomal protein bS21 family.

This chain is Small ribosomal subunit protein bS21, found in Amoebophilus asiaticus (strain 5a2).